The chain runs to 309 residues: Uridylate-specific endoribonuclease C (309 aa).

Positions 1–22 (MASGYDFGWIPVLLSLFTLTDA) are cleaved as a signal peptide. The EndoU domain maps to 27–303 (VNQELSNIFN…IGTAYPKLLS (277 aa)). Residues N53 and N121 are each glycosylated (N-linked (GlcNAc...) asparagine). Active-site residues include H181, H197, and K242.

The protein belongs to the ENDOU family. As to quaternary structure, monomer. Requires Mn(2+) as cofactor.

The protein localises to the secreted. The catalysed reaction is ribonucleotidyl-uridine-RNA = a 5'-end dephospho-uridine-RNA + a 3'-end 2',3'-cyclophospho-ribonucleotide-RNA. Functionally, endoribonuclease that cleaves single-stranded RNAs at 5' of uridylates and releases a product with a 2',3'-cyclic phosphate at the 3'-end. The UU and GU sites are more efficiently cleaved than CU and AU sites. In Danio rerio (Zebrafish), this protein is Uridylate-specific endoribonuclease C (endouc).